Here is a 239-residue protein sequence, read N- to C-terminus: 1-(5-phosphoribosyl)-5-[(5-phosphoribosylamino)methylideneamino] imidazole-4-carboxamide isomerase (239 aa).

Asp-7 functions as the Proton acceptor in the catalytic mechanism. Residue Asp-129 is the Proton donor of the active site.

It belongs to the HisA/HisF family.

It localises to the cytoplasm. It catalyses the reaction 1-(5-phospho-beta-D-ribosyl)-5-[(5-phospho-beta-D-ribosylamino)methylideneamino]imidazole-4-carboxamide = 5-[(5-phospho-1-deoxy-D-ribulos-1-ylimino)methylamino]-1-(5-phospho-beta-D-ribosyl)imidazole-4-carboxamide. The protein operates within amino-acid biosynthesis; L-histidine biosynthesis; L-histidine from 5-phospho-alpha-D-ribose 1-diphosphate: step 4/9. In Lactiplantibacillus plantarum (strain ATCC BAA-793 / NCIMB 8826 / WCFS1) (Lactobacillus plantarum), this protein is 1-(5-phosphoribosyl)-5-[(5-phosphoribosylamino)methylideneamino] imidazole-4-carboxamide isomerase.